Here is a 1025-residue protein sequence, read N- to C-terminus: Collagen alpha-1(VI) chain (1025 aa).

An N-terminal signal peptide occupies residues 1–19 (MRLAHALLPLLLQACWVAT). The interval 20–255 (QDIQGSKAIA…CCSFECQAAR (236 aa)) is N-terminal globular domain. The 199-residue stretch at 36-234 (DLFFVLDTSE…EVISQTIDTI (199 aa)) folds into the VWFA 1 domain. N-linked (GlcNAc...) asparagine glycosylation occurs at Asn211. Residues 252–588 (QAARGPPGPR…QGPPGHVGPP (337 aa)) are disordered. Residues 256–591 (GPPGPRGDPG…PGHVGPPGPD (336 aa)) are triple-helical region. The Cell attachment site motif lies at 261–263 (RGD). 2 stretches are compositionally biased toward basic and acidic residues: residues 267-284 (EGERGKPGLPGEKGEAGD) and 300-333 (KGEKGSRGEKGSRGPKGYKGEKGKRGIDGVDGMK). Short sequence motifs (cell attachment site) lie at residues 441–443 (RGD) and 477–479 (RGD). N-linked (GlcNAc...) asparagine glycans are attached at residues Asn515 and Asn536. The segment covering 549 to 559 (GEVGDPGEDNN) has biased composition (acidic residues). A compositionally biased stretch (pro residues) spans 578–588 (PQGPPGHVGPP). The interval 592–1025 (ECEILDIIMK…QTVSRKVALG (434 aa)) is C-terminal globular domain. VWFA domains follow at residues 614–802 (DILF…LKNI) and 826–1018 (DITI…YQTV). Asn801 and Asn893 each carry an N-linked (GlcNAc...) asparagine glycan.

The protein belongs to the type VI collagen family. As to quaternary structure, trimers composed of three different chains: alpha-1(VI), alpha-2(VI), and alpha-3(VI) or alpha-4(VI) or alpha-5(VI) or alpha-6(VI). Prolines at the third position of the tripeptide repeating unit (G-X-Y) are hydroxylated in some or all of the chains.

The protein localises to the secreted. It is found in the extracellular space. The protein resides in the extracellular matrix. Collagen VI acts as a cell-binding protein. The chain is Collagen alpha-1(VI) chain (Col6a1) from Mus musculus (Mouse).